A 108-amino-acid polypeptide reads, in one-letter code: Nucleoid-associated protein Bcen_6253 (108 aa).

The span at 85–95 shows a compositional bias: polar residues; that stretch reads ATSQEKMSGMT. The segment at 85–108 is disordered; that stretch reads ATSQEKMSGMTSGLPLPPGFKLPF. Over residues 99–108 the composition is skewed to pro residues; the sequence is PLPPGFKLPF.

This sequence belongs to the YbaB/EbfC family. In terms of assembly, homodimer.

Its subcellular location is the cytoplasm. The protein resides in the nucleoid. Functionally, binds to DNA and alters its conformation. May be involved in regulation of gene expression, nucleoid organization and DNA protection. The chain is Nucleoid-associated protein Bcen_6253 from Burkholderia orbicola (strain AU 1054).